Reading from the N-terminus, the 221-residue chain is Toll/interleukin-1 receptor domain-containing adapter protein (221 aa).

The interval methionine 1–tryptophan 82 is disordered. The segment covering serine 48–proline 67 has biased composition (low complexity). Residues lysine 84–valine 213 form the TIR domain. 2 disulfide bridges follow: cysteine 89–cysteine 134 and cysteine 142–cysteine 174.

Homodimer. Also forms heterodimers with MYD88. May interact with PIK3AP1. Interacts with TLR4 and IRAK2 via their respective TIR domains. Interacts with BMX and TBK1. Interacts with EIF2AK2. Does not interact with IRAK1, nor TLR9. Interacts with TLR2. Interacts with RAGE/AGER. As to quaternary structure, (Microbial infection) In case of infection, interacts with B.melitensis protein TcpB (AC Q8YF53); TcpB abolishes the TLR4-TIRAP interaction and downstream signaling. In terms of processing, phosphorylated by IRAK1 and IRAK4. Also phosphorylated by BTK. Post-translationally, polyubiquitinated. Polyubiquitination follows phosphorylation by BTK and leads to TIRAP degradation. Highly expressed in liver, kidney, spleen, skeletal muscle and heart. Also detected in peripheral blood leukocytes, lung, placenta, small intestine, thymus, colon and brain.

Its subcellular location is the cytoplasm. The protein resides in the cell membrane. It localises to the membrane. Its function is as follows. Adapter involved in TLR2, TLR4 and RAGE signaling pathways in the innate immune response. Acts via IRAK2 and TRAF-6, leading to the activation of NF-kappa-B, MAPK1, MAPK3 and JNK, and resulting in cytokine secretion and the inflammatory response. Positively regulates the production of TNF-alpha (TNF) and interleukin-6 (IL6). This Homo sapiens (Human) protein is Toll/interleukin-1 receptor domain-containing adapter protein (TIRAP).